We begin with the raw amino-acid sequence, 601 residues long: Elongation factor 4 (601 aa).

Residues 8–189 form the tr-type G domain; that stretch reads EQIRNFGIIA…LIVRKAPPPK (182 aa). A GTP-binding site is contributed by 20-25; it reads DHGKST.

This sequence belongs to the TRAFAC class translation factor GTPase superfamily. Classic translation factor GTPase family. LepA subfamily.

It is found in the cell membrane. The catalysed reaction is GTP + H2O = GDP + phosphate + H(+). Its function is as follows. Required for accurate and efficient protein synthesis under certain stress conditions. May act as a fidelity factor of the translation reaction, by catalyzing a one-codon backward translocation of tRNAs on improperly translocated ribosomes. Back-translocation proceeds from a post-translocation (POST) complex to a pre-translocation (PRE) complex, thus giving elongation factor G a second chance to translocate the tRNAs correctly. Binds to ribosomes in a GTP-dependent manner. This Tropheryma whipplei (strain Twist) (Whipple's bacillus) protein is Elongation factor 4.